The sequence spans 123 residues: Polyadenylate-binding protein-interacting protein 2B (123 aa).

Methionine 1 is subject to N-acetylmethionine. The segment covering 1–13 (MNGSNMANTSPSV) has biased composition (polar residues). Disordered regions lie at residues 1–30 (MNGSNMANTSPSVKSKEDQGLSGHDEKENP) and 91–123 (NGLSVSEGHDSEDILSKSNLNPDAKEFIPGEKY). 2 stretches are compositionally biased toward basic and acidic residues: residues 14 to 30 (KSKEDQGLSGHDEKENP) and 113 to 123 (DAKEFIPGEKY).

This sequence belongs to the PAIP2 family. As to quaternary structure, interacts (via central acidic portion and C-terminus) with PABPC1 (via the second and third RRM domains and the C-terminus). Post-translationally, ubiquitinated in vitro. Expressed in brain, cervix, heart, liver, ovary, kidney, prostate and testis.

Inhibits translation of capped and polyadenylated mRNAs by displacing PABPC1 from the poly(A) tail. This is Polyadenylate-binding protein-interacting protein 2B (PAIP2B) from Homo sapiens (Human).